A 926-amino-acid polypeptide reads, in one-letter code: OTU domain-containing protein 7A (926 aa).

The disordered stretch occupies residues 75-99 (PHVFNEGRGPKQPEREPQPGHKVER). The segment covering 82 to 99 (RGPKQPEREPQPGHKVER) has biased composition (basic and acidic residues). Phosphoserine is present on serine 119. A TRAF-binding region spans residues 168–410 (ERDLIEQATM…AVDPGKDWEW (243 aa)). The interval 183–449 (AGRLNWWSTV…VTWIRIPSET (267 aa)) is catalytic. Residues 199–374 (LLPLATTGDG…QAHFSALVSM (176 aa)) enclose the OTU domain. Aspartate 207 is an active-site residue. The active-site Nucleophile is cysteine 210. Histidine 367 serves as the catalytic Proton acceptor. Disordered regions lie at residues 452 to 514 (PLAQ…DSVA), 537 to 613 (GLVH…DAWK), and 668 to 768 (EQEQ…APAR). Over residues 481-491 (VCSNSNSNNGK) the composition is skewed to low complexity. The span at 492-510 (NGKDKEKEKQRKEKDKTRA) shows a compositional bias: basic and acidic residues. Positions 494–509 (KDKEKEKQRKEKDKTR) match the Nuclear localization signal motif. Low complexity-rich tracts occupy residues 576-592 (GASA…PSPT), 677-691 (ATAA…AATA), and 729-742 (PAAG…AGGT). Position 880 is an omega-N-methylarginine (arginine 880). The segment at 884 to 919 (GPVQRRCQRENCAFYGRAETEHYCSYCYREELRRRR) adopts an A20-type zinc-finger fold. 4 residues coordinate Zn(2+): cysteine 890, cysteine 895, cysteine 907, and cysteine 910.

This sequence belongs to the peptidase C64 family.

It is found in the cytoplasm. The protein resides in the nucleus. It carries out the reaction Thiol-dependent hydrolysis of ester, thioester, amide, peptide and isopeptide bonds formed by the C-terminal Gly of ubiquitin (a 76-residue protein attached to proteins as an intracellular targeting signal).. Deubiquitinase, which cleaves 'Lys-11'-linked polyubiquitin chains. Might be required for PA28-20S proteasome assembly. This chain is OTU domain-containing protein 7A (OTUD7A), found in Homo sapiens (Human).